The following is a 240-amino-acid chain: Putative S-adenosylmethionine-dependent methyltransferase RcsF (240 aa).

A TsaA-like domain is found at 5-142 (ISPIGHVRSC…YVPYADIVPD (138 aa)). S-adenosyl-L-methionine contacts are provided by residues 22–24 (PRQ), 63–64 (HQ), arginine 91, and 122–125 (LDGT).

This sequence belongs to the tRNA methyltransferase O family.

This Pseudomonas aeruginosa protein is Putative S-adenosylmethionine-dependent methyltransferase RcsF (rcsF).